A 174-amino-acid polypeptide reads, in one-letter code: MNMLVINGTPRKHGRTRIAASYIAALYHTDLIDLSEFVLPVFNGEAEQSELLKVQELKQRVTKADAIVLLSPEYHSGMSGALKNALDFLSSEQFKYKPVALLAVAGGGKGGINALNNMRTVMRGVYANVIPKQLVLDPVHIDVENATVAENIKESIKELVEELSMFAKAGNPGV.

FMN contacts are provided by residues 9 to 11, 15 to 16, 73 to 76, and glycine 106; these read TPR, RT, and EYHS.

This sequence belongs to the azoreductase type 2 family. In terms of assembly, homotetramer. FMN serves as cofactor.

In terms of biological role, catalyzes the reductive cleavage of azo bond in aromatic azo compounds to the corresponding amines. Requires NADPH, but not NADH, as an electron donor for its activity. This Bacillus subtilis (strain 168) protein is FMN-dependent NADPH-azoreductase (azr).